A 238-amino-acid polypeptide reads, in one-letter code: Small ribosomal subunit protein uS2 (238 aa).

This sequence belongs to the universal ribosomal protein uS2 family.

The protein is Small ribosomal subunit protein uS2 of Actinobacillus pleuropneumoniae serotype 7 (strain AP76).